A 463-amino-acid chain; its full sequence is Hexose-6-phosphate:phosphate antiporter (463 aa).

Residues 1–24 are Cytoplasmic-facing; that stretch reads MLAFLNQVRKPTLDLPLDVRRKMW. The helical transmembrane segment at 25-45 threads the bilayer; it reads FKPFMQSYLVVFIGYLTMYLI. The Periplasmic segment spans residues 46–60; it reads RKNFNIAQNDMISTY. Residues 61–81 traverse the membrane as a helical segment; it reads GLSMTELGMIGLGFSITYGVG. The Cytoplasmic segment spans residues 82–96; the sequence is KTLVSYYADGKNTKQ. Residues 97 to 117 traverse the membrane as a helical segment; that stretch reads FLPFMLILSAICMLGFSASMG. Over 118–122 the chain is Periplasmic; that stretch reads AGSTS. Residues 123 to 143 form a helical membrane-spanning segment; that stretch reads LFLMIAFYALSGFFQSTGGSC. Residues 144–159 lie on the Cytoplasmic side of the membrane; that stretch reads SYSTITKWTPRRKRGT. Residues 160–180 traverse the membrane as a helical segment; that stretch reads FLGFWNISHNLGGAGAAGVAL. The Periplasmic portion of the chain corresponds to 181–189; sequence FGANYLFDG. A helical membrane pass occupies residues 190 to 210; that stretch reads HVIGMFIFPSIIALIVGFIGL. Residues 211-259 lie on the Cytoplasmic side of the membrane; it reads RFGSDSPESYGLGKAEELFGEEISEEDKETEENEMTKWQIFVEYVLKNK. A helical transmembrane segment spans residues 260-280; that stretch reads VIWLLCFSNIFLYVVRIGIDQ. Residues 281-297 lie on the Periplasmic side of the membrane; that stretch reads WSTVYAFQELKLSKEVA. A helical transmembrane segment spans residues 298-318; the sequence is IQGFTLFEVGALVGTLLWGWL. Over 319–326 the chain is Cytoplasmic; sequence SDLANGRR. The helical transmembrane segment at 327 to 347 threads the bilayer; sequence ALVACVALALIIATLGVYQHA. Over 348–357 the chain is Periplasmic; the sequence is SNQYVYLASL. A helical membrane pass occupies residues 358 to 378; that stretch reads FALGFLVFGPQLLIGVAAVGF. Topologically, residues 379–382 are cytoplasmic; it reads VPKK. The chain crosses the membrane as a helical span at residues 383-403; it reads AIGAADGIKGTFAYLIGDSFA. Residues 404 to 425 are Periplasmic-facing; the sequence is KLGLGMIADGTPVFGLTGWAGT. A helical membrane pass occupies residues 426–446; it reads FAALDAAAIGCICLMAMVAVM. The Cytoplasmic portion of the chain corresponds to 447–463; the sequence is EERKIRREKKIQQVNIA.

The protein belongs to the major facilitator superfamily. Organophosphate:Pi antiporter (OPA) (TC 2.A.1.4) family.

It is found in the cell inner membrane. Functionally, mediates the exchange of external hexose 6-phosphate and internal inorganic phosphate. This Salmonella typhimurium (strain LT2 / SGSC1412 / ATCC 700720) protein is Hexose-6-phosphate:phosphate antiporter (uhpT).